The following is a 295-amino-acid chain: MNENQMKRIHTGKGFIAALDQSGGSTPKALLEYGIKENSYSNEDEMFGLVHEMRKRIIKSPAFTLEYILGAILFEDTMYRTIDNQYTPDYLWKEKNIVPFLKVDKGLTEIENGVQLMKPISNLDDLLKHAVEKNIFGTKMRSVIKEANAKGIKMLVNQQFEIGKQIVEAGLVPIIEPEVDIHSTDKEESEKLLKLEILEQLSKLDKETKVMLKLSIPTQDNFYIDLIDDPHVVRVVALSGGYSQAEAKERLGRNHGLIASFSRALSQGLTAQQTEEEFNGTISKSIKEIYEASIK.

Glu-176 serves as the catalytic Proton acceptor. Catalysis depends on Lys-213, which acts as the Schiff-base intermediate with dihydroxyacetone-P.

Belongs to the class I fructose-bisphosphate aldolase family.

The enzyme catalyses beta-D-fructose 1,6-bisphosphate = D-glyceraldehyde 3-phosphate + dihydroxyacetone phosphate. It participates in carbohydrate degradation; glycolysis; D-glyceraldehyde 3-phosphate and glycerone phosphate from D-glucose: step 4/4. This Clostridium beijerinckii (strain ATCC 51743 / NCIMB 8052) (Clostridium acetobutylicum) protein is Fructose-bisphosphate aldolase class 1.